A 240-amino-acid polypeptide reads, in one-letter code: Proteasome subunit alpha (240 aa).

This sequence belongs to the peptidase T1A family. The 20S proteasome core is composed of 14 alpha and 14 beta subunits that assemble into four stacked heptameric rings, resulting in a barrel-shaped structure. The two inner rings, each composed of seven catalytic beta subunits, are sandwiched by two outer rings, each composed of seven alpha subunits. The catalytic chamber with the active sites is on the inside of the barrel. Has a gated structure, the ends of the cylinder being occluded by the N-termini of the alpha-subunits. Is capped at one or both ends by the proteasome regulatory ATPase, PAN.

The protein resides in the cytoplasm. The formation of the proteasomal ATPase PAN-20S proteasome complex, via the docking of the C-termini of PAN into the intersubunit pockets in the alpha-rings, triggers opening of the gate for substrate entry. Interconversion between the open-gate and close-gate conformations leads to a dynamic regulation of the 20S proteasome proteolysis activity. Its function is as follows. Component of the proteasome core, a large protease complex with broad specificity involved in protein degradation. This chain is Proteasome subunit alpha, found in Methanoculleus marisnigri (strain ATCC 35101 / DSM 1498 / JR1).